We begin with the raw amino-acid sequence, 62 residues long: MGKQCFVTGRKASTGNNRSHALNSSKRRWNANLQKVRILVDGKPKKVWVSARALKSGKVTRV.

Residues 1–24 are disordered; that stretch reads MGKQCFVTGRKASTGNNRSHALNS. Residues 11 to 24 show a composition bias toward polar residues; the sequence is KASTGNNRSHALNS.

This sequence belongs to the bacterial ribosomal protein bL28 family.

The sequence is that of Large ribosomal subunit protein bL28 from Staphylococcus saprophyticus subsp. saprophyticus (strain ATCC 15305 / DSM 20229 / NCIMB 8711 / NCTC 7292 / S-41).